Consider the following 369-residue polypeptide: Protein DUF642 L-GALACTONO-1,4-LACTONE-RESPONSIVE GENE 2 (369 aa).

The first 19 residues, 1–19 (MEGVTVVSFFLLFIATAMA), serve as a signal peptide directing secretion. Asn125 carries an N-linked (GlcNAc...) asparagine glycan.

As to expression, expressed in roots, seedlings and leaves.

The protein resides in the secreted. The protein localises to the cell wall. Functionally, involved in the regulation of testa rupture during seed germination. Required during roots and rosettes development. The protein is Protein DUF642 L-GALACTONO-1,4-LACTONE-RESPONSIVE GENE 2 of Arabidopsis thaliana (Mouse-ear cress).